The following is a 436-amino-acid chain: Ribosomal protein uS12 methylthiotransferase RimO (436 aa).

Residues 4-122 (KRIDIITLGC…LLQDLGKTYH (119 aa)) form the MTTase N-terminal domain. [4Fe-4S] cluster is bound by residues C13, C51, C85, C146, C150, and C153. The 232-residue stretch at 132-363 (TTPKHYAYLK…MDIQQGISAE (232 aa)) folds into the Radical SAM core domain. Positions 366-433 (AAKIGQQMKV…DFDLYAKILN (68 aa)) constitute a TRAM domain.

Belongs to the methylthiotransferase family. RimO subfamily. It depends on [4Fe-4S] cluster as a cofactor.

It localises to the cytoplasm. It carries out the reaction L-aspartate(89)-[ribosomal protein uS12]-hydrogen + (sulfur carrier)-SH + AH2 + 2 S-adenosyl-L-methionine = 3-methylsulfanyl-L-aspartate(89)-[ribosomal protein uS12]-hydrogen + (sulfur carrier)-H + 5'-deoxyadenosine + L-methionine + A + S-adenosyl-L-homocysteine + 2 H(+). Catalyzes the methylthiolation of an aspartic acid residue of ribosomal protein uS12. The polypeptide is Ribosomal protein uS12 methylthiotransferase RimO (Bacteroides thetaiotaomicron (strain ATCC 29148 / DSM 2079 / JCM 5827 / CCUG 10774 / NCTC 10582 / VPI-5482 / E50)).